The following is a 268-amino-acid chain: Bis(5'-nucleosyl)-tetraphosphatase, symmetrical (268 aa).

This sequence belongs to the Ap4A hydrolase family.

It carries out the reaction P(1),P(4)-bis(5'-adenosyl) tetraphosphate + H2O = 2 ADP + 2 H(+). Its function is as follows. Hydrolyzes diadenosine 5',5'''-P1,P4-tetraphosphate to yield ADP. The chain is Bis(5'-nucleosyl)-tetraphosphatase, symmetrical from Vibrio campbellii (strain ATCC BAA-1116).